The following is a 281-amino-acid chain: Glyceraldehyde dehydrogenase medium chain (281 aa).

Residues 1-176 (MYPPEFSYVR…TQIEVPVLDG (176 aa)) enclose the FAD-binding PCMH-type domain. FAD is bound by residues 31–35 (AGGQS) and 110–114 (TIGGA).

In terms of assembly, heterotrimer composed of a large chain (CutA), a medium chain (CutB) and a small chain (CutC). Requires FAD as cofactor.

The protein resides in the cytoplasm. The catalysed reaction is D-glyceraldehyde + A + H2O = (R)-glycerate + AH2 + H(+). Functionally, component of the glyceraldehyde dehydrogenase which is involved the nonphosphorylated Entner-Doudoroff pathway. Catalyzes the oxidation of D-glyceraldehyde to yield glycerate. When the artificial electron acceptor 2,6-dichlorophenol-indophenol (Cl2Ind) is used, the enzyme shows a broad substrate range (glyceraldehyde-3-phosphate, formaldehyde, acetaldehyde, propionaldehyde and isobutyraldehyde), but is most active with D-glyceraldehyde. It is not known which acceptor is utilized in vivo. The polypeptide is Glyceraldehyde dehydrogenase medium chain (cutB) (Sulfolobus acidocaldarius (strain ATCC 33909 / DSM 639 / JCM 8929 / NBRC 15157 / NCIMB 11770)).